The sequence spans 274 residues: Actin-binding protein Smlt3054 (274 aa).

2 ANK repeats span residues 192-221 and 225-254; these read SGNT…DVAA and HGWA…NPEQ. The interval 251 to 274 is disordered; it reads NPEQPGWRGRTPTRMHRHEQTQAL.

Exists as a dimer as well as a higher order oligomer.

The protein localises to the secreted. It localises to the periplasm. Functionally, directly binds F-actin, which results in thickened and distorted F-actin fibers, and affects cellular F-actin localization. Thus, may be a host effector whose function is to disrupt host actin cytoskeletal structure, which may enhance invasion. This is Actin-binding protein Smlt3054 from Stenotrophomonas maltophilia (strain K279a).